The sequence spans 206 residues: Dephospho-CoA kinase (206 aa).

A DPCK domain is found at Ile-4–Gln-204. An ATP-binding site is contributed by Gly-12–Thr-17.

Belongs to the CoaE family.

The protein resides in the cytoplasm. The catalysed reaction is 3'-dephospho-CoA + ATP = ADP + CoA + H(+). The protein operates within cofactor biosynthesis; coenzyme A biosynthesis; CoA from (R)-pantothenate: step 5/5. Functionally, catalyzes the phosphorylation of the 3'-hydroxyl group of dephosphocoenzyme A to form coenzyme A. The polypeptide is Dephospho-CoA kinase (Pasteurella multocida (strain Pm70)).